We begin with the raw amino-acid sequence, 365 residues long: Aminotransferase poxL (365 aa).

A pyridoxal 5'-phosphate-binding site is contributed by R92. Residue K193 is modified to N6-(pyridoxal phosphate)lysine. E229 is a pyridoxal 5'-phosphate binding site.

Belongs to the class-IV pyridoxal-phosphate-dependent aminotransferase family. Requires pyridoxal 5'-phosphate as cofactor.

It participates in secondary metabolite biosynthesis. Its function is as follows. Aminotransferase; part of the gene cluster that mediates the biosynthesis of oxaleimides, cytotoxic compounds containing an unusual disubstituted succinimide moiety. The first step of the pathway is provided by the HR-PKS poxF that serves in a new mode of collaborative biosynthesis with the PKS-NRPS poxE, by providing the olefin containing amino acid substrate via the synthesis of an ACP-bound dec-4-enoate. The cytochrome P450 monooxygenase poxM-catalyzed oxidation at the alpha-position creates the enzyme-bound 2-hydroxydec-4-enoyl-ACP thioester, which may be prone to spontaneous hydrolysis to yield 2-hydroxydec-4-enoic acid due to increased electrophilicity of the carbonyl. 2-hydroxydec-4-enoic acid can then be further oxidized by poxM to yield the alpha-ketoacid 2-oxodec-4-enoicacid, which is reductively aminated by the aminotransferase poxL to yield (S,E)-2-aminodec-4-enoic acid. The Hybrid PKS-NRPS synthetase poxE then performs condensation between the octaketide product of its PKS modules and the amino group of (S,E)-2-aminodec-4-enoic acid which is activated and incorporated by the adenylation domain. The resulting aminoacyl product can be cyclized by the Diels-Alderase PoxQ and reductively released by the reductive (R) domain of poxE to yield an aldehyde intermediate. The released aldehyde is then substrate for a Knoevenagel condensation by the hydrolyase poxO followed by an oxidation at the 5-position of the pyrrolidone ring. The presence of the olefin from the amino acid building block allows for migration of the substituted allyl group to occur. This allylic transposition reaction takes place in a conjugate addition, semipinacol-like fashion to yield a succinimide intermediate. Iterative two-electron oxidations of the C7 methyl of the succinimide intermediate to the carboxylic acid can be catalyzed by one of two remaining cytochrome P450 monooxygenasess poxC or poxD to yield oxaleimide A. Subsequent oxidation yields the maleimide scaffold oxaleimide I. Both oxaleimide A and oxaleimide I can undergo oxidative modifications in the decalin ring to yield the series of products oxaleimides B to H. The chain is Aminotransferase poxL from Penicillium oxalicum.